A 610-amino-acid chain; its full sequence is UvrABC system protein C (610 aa).

Residues 16–94 enclose the GIY-YIG domain; that stretch reads SQPGVYRMYD…IKLYQPRYNV (79 aa). Positions 204 to 239 constitute a UVR domain; that stretch reads DQVLTQLIARMEKASQSLEFEEAARIRDQIQAVRRV. A disordered region spans residues 540–559; sequence HAISGHRKKRAKVKSTSSLE. Positions 543–552 are enriched in basic residues; that stretch reads SGHRKKRAKV.

The protein belongs to the UvrC family. As to quaternary structure, interacts with UvrB in an incision complex.

The protein resides in the cytoplasm. In terms of biological role, the UvrABC repair system catalyzes the recognition and processing of DNA lesions. UvrC both incises the 5' and 3' sides of the lesion. The N-terminal half is responsible for the 3' incision and the C-terminal half is responsible for the 5' incision. The protein is UvrABC system protein C of Klebsiella pneumoniae (strain 342).